We begin with the raw amino-acid sequence, 344 residues long: Heat-inducible transcription repressor HrcA (344 aa).

It belongs to the HrcA family.

Functionally, negative regulator of class I heat shock genes (grpE-dnaK-dnaJ and groELS operons). Prevents heat-shock induction of these operons. In Corynebacterium aurimucosum (strain ATCC 700975 / DSM 44827 / CIP 107346 / CN-1) (Corynebacterium nigricans), this protein is Heat-inducible transcription repressor HrcA.